The primary structure comprises 166 residues: uncharacterized protein (166 aa).

This is an uncharacterized protein from Enterobacteria phage T4 (Bacteriophage T4).